Reading from the N-terminus, the 241-residue chain is 3-deoxy-D-manno-octulosonic acid kinase (241 aa).

Residue Asp171 is part of the active site.

The protein belongs to the protein kinase superfamily. KdkA/RfaP family.

It localises to the cell inner membrane. The catalysed reaction is an alpha-Kdo-(2-&gt;6)-lipid IVA + ATP = a 4-O-phospho-alpha-Kdo-(2-&gt;6)-lipid IVA + ADP + H(+). The protein operates within bacterial outer membrane biogenesis; LPS core biosynthesis. Functionally, catalyzes the ATP-dependent phosphorylation of the 3-deoxy-D-manno-octulosonic acid (Kdo) residue in Kdo-lipid IV(A) at the 4-OH position. This chain is 3-deoxy-D-manno-octulosonic acid kinase, found in Haemophilus influenzae (strain PittGG).